A 246-amino-acid chain; its full sequence is Dehydration-responsive element-binding protein 1H (246 aa).

Residues 1–43 (MDMAGHEVNSSSSSSGAESSSSSSGRQQYKKRPAGRTKFRETR) are disordered. The segment covering 10-24 (SSSSSSGAESSSSSS) has biased composition (low complexity). The segment covering 28–37 (QYKKRPAGRT) has biased composition (basic residues). A DNA-binding region (AP2/ERF) is located at residues 46–110 (VYRGVRRRGG…GGGAACLNFQ (65 aa)). The tract at residues 155-187 (AMDEATSGVSAPPPLANNAGSSETPGPSSIDGT) is disordered. A compositionally biased stretch (polar residues) spans 172-181 (NAGSSETPGP).

It belongs to the AP2/ERF transcription factor family. ERF subfamily.

It localises to the nucleus. Functionally, transcriptional activator that binds specifically to the DNA sequence 5'-[AG]CCGAC-3'. Binding to the C-repeat/DRE element mediates high salinity- and dehydration-inducible transcription. In Oryza sativa subsp. indica (Rice), this protein is Dehydration-responsive element-binding protein 1H (DREB1H).